The chain runs to 121 residues: uncharacterized protein (121 aa).

A Cupin type-2 domain is found at 47-101 (SEVPHYHAEHDLTFTVLKGKGELYLEGEKKKLKEGDWAFIPKGAVHFYRNTSELS).

This is an uncharacterized protein from Aquifex aeolicus (strain VF5).